The sequence spans 259 residues: Thiazole synthase (259 aa).

Lys98 acts as the Schiff-base intermediate with DXP in catalysis. 1-deoxy-D-xylulose 5-phosphate-binding positions include Gly159, 185–186 (AG), and 207–208 (NS).

The protein belongs to the ThiG family. In terms of assembly, homotetramer. Forms heterodimers with either ThiH or ThiS.

It is found in the cytoplasm. The enzyme catalyses [ThiS sulfur-carrier protein]-C-terminal-Gly-aminoethanethioate + 2-iminoacetate + 1-deoxy-D-xylulose 5-phosphate = [ThiS sulfur-carrier protein]-C-terminal Gly-Gly + 2-[(2R,5Z)-2-carboxy-4-methylthiazol-5(2H)-ylidene]ethyl phosphate + 2 H2O + H(+). It participates in cofactor biosynthesis; thiamine diphosphate biosynthesis. In terms of biological role, catalyzes the rearrangement of 1-deoxy-D-xylulose 5-phosphate (DXP) to produce the thiazole phosphate moiety of thiamine. Sulfur is provided by the thiocarboxylate moiety of the carrier protein ThiS. In vitro, sulfur can be provided by H(2)S. The protein is Thiazole synthase of Chlorobium limicola (strain DSM 245 / NBRC 103803 / 6330).